A 461-amino-acid polypeptide reads, in one-letter code: Peptidyl-prolyl cis-trans isomerase-like 4 (461 aa).

One can recognise a PPIase cyclophilin-type domain in the interval 1-171; the sequence is MSVLLETSLG…KDIRIRHTVI (171 aa). Residues 205-234 adopt a coiled-coil conformation; sequence EELDDNMDEESMEKLRREREARAQALTLEM. Residues 248–326 form the RRM domain; that stretch reads NVLFVCKLNP…HRIHVDFSQS (79 aa). The segment at 341–461 is disordered; it reads KRSGQRGGFG…DERYRERRRR (121 aa). Basic and acidic residues-rich tracts occupy residues 365-384 and 398-461; these read DNAR…GDKA and SNRD…RRRR.

This sequence belongs to the cyclophilin-type PPIase family. PPIL4 subfamily.

The protein localises to the nucleus. It carries out the reaction [protein]-peptidylproline (omega=180) = [protein]-peptidylproline (omega=0). In terms of biological role, PPIases accelerate the folding of proteins. It catalyzes the cis-trans isomerization of proline imidic peptide bonds in oligopeptides. The sequence is that of Peptidyl-prolyl cis-trans isomerase-like 4 (cyp6) from Aspergillus oryzae (strain ATCC 42149 / RIB 40) (Yellow koji mold).